The primary structure comprises 320 residues: MLYKRNPQLNKNGELIHLLSIEGLPKDIVTHILDTAANFTSVSDREVKKVPLLRGKSVFNLFFENSTRTRTTFEIAAKRLSADVINLDIARSSATKGESLLDTIANLSAMAADLFVVRHSESGAPYLIAQHVAPHVHVVNAGDGRHAHPTQGLLDMYTIRHYKKDFANLTVAIVGDVLHSRVARSDIHALTTLGCAEVRVVGPKTLVPGDMAGMGVRVCHTLEEGIRDCDVIIMLRLQNERMSGALLPSSQEFFKTYGLTPEKLQLAKSDAIVMHPGPINRGVEIDSAVVDGKQSVILPQVTFGIAVRMAVMSIVAGNEA.

Arginine 68 and threonine 69 together coordinate carbamoyl phosphate. Lysine 96 contributes to the L-aspartate binding site. Carbamoyl phosphate is bound by residues arginine 118, histidine 148, and glutamine 151. 2 residues coordinate L-aspartate: arginine 181 and arginine 236. The carbamoyl phosphate site is built by glycine 277 and proline 278.

Belongs to the aspartate/ornithine carbamoyltransferase superfamily. ATCase family. In terms of assembly, heterododecamer (2C3:3R2) of six catalytic PyrB chains organized as two trimers (C3), and six regulatory PyrI chains organized as three dimers (R2).

It carries out the reaction carbamoyl phosphate + L-aspartate = N-carbamoyl-L-aspartate + phosphate + H(+). It functions in the pathway pyrimidine metabolism; UMP biosynthesis via de novo pathway; (S)-dihydroorotate from bicarbonate: step 2/3. Its function is as follows. Catalyzes the condensation of carbamoyl phosphate and aspartate to form carbamoyl aspartate and inorganic phosphate, the committed step in the de novo pyrimidine nucleotide biosynthesis pathway. The protein is Aspartate carbamoyltransferase catalytic subunit of Variovorax paradoxus (strain S110).